We begin with the raw amino-acid sequence, 270 residues long: Shikimate dehydrogenase (NADP(+)) (270 aa).

Shikimate is bound by residues 14-16 (SLS) and threonine 61. The active-site Proton acceptor is lysine 65. Aspartate 77 contacts NADP(+). Positions 86 and 101 each coordinate shikimate. NADP(+) contacts are provided by residues 125–129 (GNGGA) and isoleucine 210. Tyrosine 212 is a binding site for shikimate. Residue glycine 233 coordinates NADP(+).

This sequence belongs to the shikimate dehydrogenase family. As to quaternary structure, homodimer.

The catalysed reaction is shikimate + NADP(+) = 3-dehydroshikimate + NADPH + H(+). It participates in metabolic intermediate biosynthesis; chorismate biosynthesis; chorismate from D-erythrose 4-phosphate and phosphoenolpyruvate: step 4/7. In terms of biological role, involved in the biosynthesis of the chorismate, which leads to the biosynthesis of aromatic amino acids. Catalyzes the reversible NADPH linked reduction of 3-dehydroshikimate (DHSA) to yield shikimate (SA). The chain is Shikimate dehydrogenase (NADP(+)) from Clostridium beijerinckii (strain ATCC 51743 / NCIMB 8052) (Clostridium acetobutylicum).